The following is a 753-amino-acid chain: MTILNHTLGFPRVGLRRELKKAQESYWAGNSTREELLAVGRELRARHWDQQKQAGIDLLPVGDFAWYDHVLTTSLLLGNVPARHQNKDGSVDIDTLFRIGRGRAPTGEPAAAAEMTKWFNTNYHYMVPEFVKGQQFKLTWTQLLEEVDEALALGHNVKPVLLGPVTWLWLGKVKGEQFDRLSLLNDILPVYQQVLAELAKRGIEWVQIDEPALVLELPQAWLDAYKPAYDALQGQVKLLLTTYFEGVTPNLDTITALPVQGLHVDLVHGKDDVVELHKRLPSDWLLSAGLINGRNVWRADLTEKYAQIKDIVGKRDLWVASSCSLLHSPIDLSVETRLDAEVKSWFAFALQKCHELALLRDVLNSGDTAALAEWSAPIQARRHSTRVHNPAVEKRLAAITAQDSQRANVYEVRAEAQRARFKLPAWPTTTIGSFPQTTEIRTLRLDFKKGNLDANNYRTGIAEHIRQAIVEQERLGLDVLVHGEAERNDMVEYFGEHLDGFVFTQNGWVQSYGSRCVKPPIVIGDVSRPAPITVEWAKYAQSLTDKPVKGMLTGPVTILCWSFPREDVSRETIAKQIALALRDEVADLEAAGIGIIQIDEPALREGLPLRRSDWDAYLQWGVEAFRINAAVAKDDTQIHTHMCYCEFNDIMDSIAALDADVITIETSRSDMELLESFEEFDYPNEIGPGVYDIHSPNVPSVEWIEALLKKAAKRIPAERLWVNPDCGLKTRGWPETRAALANMVQAAQNLRRG.

Residues 17 to 20 (RELK) and Lys117 each bind 5-methyltetrahydropteroyltri-L-glutamate. Residues 431-433 (IGS) and Glu484 contribute to the L-homocysteine site. L-methionine contacts are provided by residues 431–433 (IGS) and Glu484. 5-methyltetrahydropteroyltri-L-glutamate-binding positions include 515–516 (RC) and Trp561. Asp599 is a binding site for L-homocysteine. Residue Asp599 participates in L-methionine binding. Residue Glu605 participates in 5-methyltetrahydropteroyltri-L-glutamate binding. Zn(2+) is bound by residues His641, Cys643, and Glu665. The active-site Proton donor is His694. Cys726 is a binding site for Zn(2+).

The protein belongs to the vitamin-B12 independent methionine synthase family. The cofactor is Zn(2+).

It carries out the reaction 5-methyltetrahydropteroyltri-L-glutamate + L-homocysteine = tetrahydropteroyltri-L-glutamate + L-methionine. Its pathway is amino-acid biosynthesis; L-methionine biosynthesis via de novo pathway; L-methionine from L-homocysteine (MetE route): step 1/1. In terms of biological role, catalyzes the transfer of a methyl group from 5-methyltetrahydrofolate to homocysteine resulting in methionine formation. In Shigella dysenteriae serotype 1 (strain Sd197), this protein is 5-methyltetrahydropteroyltriglutamate--homocysteine methyltransferase.